Reading from the N-terminus, the 396-residue chain is Elongation factor Tu (396 aa).

Residues 10-206 (KPHVNIGTIG…AVDSYIPDPE (197 aa)) form the tr-type G domain. Residues 19–26 (GHVDHGKT) form a G1 region. 19-26 (GHVDHGKT) is a GTP binding site. Position 26 (Thr26) interacts with Mg(2+). A G2 region spans residues 60 to 64 (GITIA). Residues 81–84 (DCPG) form a G3 region. GTP-binding positions include 81–85 (DCPGH) and 136–139 (NKAD). Positions 136–139 (NKAD) are G4. Residues 174–176 (SAL) form a G5 region.

Belongs to the TRAFAC class translation factor GTPase superfamily. Classic translation factor GTPase family. EF-Tu/EF-1A subfamily. As to quaternary structure, monomer.

It is found in the cytoplasm. The catalysed reaction is GTP + H2O = GDP + phosphate + H(+). GTP hydrolase that promotes the GTP-dependent binding of aminoacyl-tRNA to the A-site of ribosomes during protein biosynthesis. In Pelobacter propionicus (strain DSM 2379 / NBRC 103807 / OttBd1), this protein is Elongation factor Tu.